A 360-amino-acid chain; its full sequence is DNA replication and repair protein RecF (360 aa).

33-40 is an ATP binding site; it reads GENGSGKT.

The protein belongs to the RecF family.

The protein localises to the cytoplasm. Its function is as follows. The RecF protein is involved in DNA metabolism; it is required for DNA replication and normal SOS inducibility. RecF binds preferentially to single-stranded, linear DNA. It also seems to bind ATP. The polypeptide is DNA replication and repair protein RecF (Rickettsia conorii (strain ATCC VR-613 / Malish 7)).